Consider the following 214-residue polypeptide: Somatotropin-A (214 aa).

Residues 1–25 (MATGFCSSFGLLVVLLLKNVADVGA) form the signal peptide. 2 disulfide bridges follow: Cys-77/Cys-187 and Cys-204/Cys-212.

The protein belongs to the somatotropin/prolactin family.

The protein resides in the secreted. Growth hormone plays an important role in growth control. This is Somatotropin-A (gh-a) from Xenopus laevis (African clawed frog).